A 469-amino-acid chain; its full sequence is Serine hydroxymethyltransferase, cytosolic (469 aa).

Lys-248 is subject to N6-(pyridoxal phosphate)lysine.

Belongs to the SHMT family. As to quaternary structure, homotetramer. It depends on pyridoxal 5'-phosphate as a cofactor.

It localises to the cytoplasm. The enzyme catalyses (6R)-5,10-methylene-5,6,7,8-tetrahydrofolate + glycine + H2O = (6S)-5,6,7,8-tetrahydrofolate + L-serine. Its pathway is one-carbon metabolism; tetrahydrofolate interconversion. Functionally, interconversion of serine and glycine. The protein is Serine hydroxymethyltransferase, cytosolic (SHM2) of Eremothecium gossypii (strain ATCC 10895 / CBS 109.51 / FGSC 9923 / NRRL Y-1056) (Yeast).